The sequence spans 597 residues: Aspartate--tRNA ligase (597 aa).

Glu173 is an L-aspartate binding site. Residues 197–200 (QLFK) form an aspartate region. Arg219 serves as a coordination point for L-aspartate. Residues 219–221 (RDE) and Gln228 contribute to the ATP site. His449 is an L-aspartate binding site. Residue Glu483 participates in ATP binding. Arg490 provides a ligand contact to L-aspartate. 535–538 (GLDR) lines the ATP pocket.

Belongs to the class-II aminoacyl-tRNA synthetase family. Type 1 subfamily. As to quaternary structure, homodimer.

Its subcellular location is the cytoplasm. It carries out the reaction tRNA(Asp) + L-aspartate + ATP = L-aspartyl-tRNA(Asp) + AMP + diphosphate. Functionally, catalyzes the attachment of L-aspartate to tRNA(Asp) in a two-step reaction: L-aspartate is first activated by ATP to form Asp-AMP and then transferred to the acceptor end of tRNA(Asp). This Shewanella pealeana (strain ATCC 700345 / ANG-SQ1) protein is Aspartate--tRNA ligase.